The primary structure comprises 447 residues: Adenylosuccinate synthetase (447 aa).

GTP-binding positions include 35–41 and 63–65; these read GDEGKGK and GHT. Residue aspartate 36 is the Proton acceptor of the active site. Residues aspartate 36 and glycine 63 each coordinate Mg(2+). IMP is bound by residues 36 to 39, 61 to 64, threonine 153, arginine 167, asparagine 245, threonine 260, and arginine 324; these read DEGK and NAGH. Residue histidine 64 is the Proton donor of the active site. 320–326 lines the substrate pocket; that stretch reads VTTKRKR. Residues arginine 326, 352–354, and 435–437 contribute to the GTP site; these read KLD and GVG.

The protein belongs to the adenylosuccinate synthetase family. As to quaternary structure, homodimer. It depends on Mg(2+) as a cofactor.

It is found in the cytoplasm. It catalyses the reaction IMP + L-aspartate + GTP = N(6)-(1,2-dicarboxyethyl)-AMP + GDP + phosphate + 2 H(+). Its pathway is purine metabolism; AMP biosynthesis via de novo pathway; AMP from IMP: step 1/2. Its function is as follows. Plays an important role in the de novo pathway and in the salvage pathway of purine nucleotide biosynthesis. Catalyzes the first committed step in the biosynthesis of AMP from IMP. The chain is Adenylosuccinate synthetase from Drosophila erecta (Fruit fly).